The sequence spans 144 residues: MYSEIQRERADIEGLMARPEYREWNSELIKPKKLLNPVKASRSHQELHRELLMNHKRGLGMDSKPELQRVLEHRRRNQLIKKKEEELEAKRMQCPFKQELLRRQQRLNQLENPPQRDEDHAPEFIKVRENLRRITTLTSEERAL.

A coiled-coil region spans residues 70–90; sequence VLEHRRRNQLIKKKEEELEAK. The Nuclear localization signal motif lies at 74–84; sequence RRRNQLIKKKE. The disordered stretch occupies residues 104–123; sequence QQRLNQLENPPQRDEDHAPE. The span at 114–123 shows a compositional bias: basic and acidic residues; sequence PQRDEDHAPE.

Interacts with ACTB. Interacts with F-actin. Interacts with PRDX1. Interacts with COMMD1; this interaction stabilizes COMMD1 in the nucleus. Interacts with MAP1A. As to expression, expressed in septum, the neocortex, the CA3 region of the hippocampus and the cerebellum (at protein level).

It is found in the nucleus. It localises to the cytoplasm. Its subcellular location is the cytoskeleton. The protein resides in the stress fiber. The protein localises to the cell junction. It is found in the focal adhesion. It localises to the cell projection. Its subcellular location is the ruffle membrane. The protein resides in the synapse. In terms of biological role, stress-inducible actin-binding protein that plays a role in synaptic and cognitive functions by modulating actin filamentous (F-actin) dynamics. Mediates polymerization of globular actin to F-actin. Also binds to, stabilizes and bundles F-actin. Involved in synaptic function by regulating neurite outgrowth in an actin-dependent manner and for the acquisition of hippocampus-dependent cognitive function, such as learning and long-term memory. Plays a role in the actin and microtubule cytoskeleton organization; negatively regulates focal adhesion (FA) assembly promoting malignant glial cell migration in an actin-, microtubule- and MAP1A-dependent manner. Also involved in neuroblastoma G1/S phase cell cycle progression and cell proliferation inhibition by stimulating ubiquitination of NF-kappa-B subunit RELA and NF-kappa-B degradation in a COMMD1- and actin-dependent manner. May play a role in tumor development. This is Actin-associated protein FAM107A from Mus musculus (Mouse).